Reading from the N-terminus, the 233-residue chain is ATP synthase subunit a (233 aa).

6 consecutive transmembrane segments (helical) span residues Ala27–Leu47, Tyr85–Val105, Val114–Val134, Leu143–Val163, Val189–Val209, and Ser210–Ala230.

The protein belongs to the ATPase A chain family. F-type ATPases have 2 components, CF(1) - the catalytic core - and CF(0) - the membrane proton channel. CF(1) has five subunits: alpha(3), beta(3), gamma(1), delta(1), epsilon(1). CF(0) has three main subunits: a(1), b(2) and c(9-12). The alpha and beta chains form an alternating ring which encloses part of the gamma chain. CF(1) is attached to CF(0) by a central stalk formed by the gamma and epsilon chains, while a peripheral stalk is formed by the delta and b chains.

The protein resides in the cell inner membrane. Functionally, key component of the proton channel; it plays a direct role in the translocation of protons across the membrane. The protein is ATP synthase subunit a of Solibacter usitatus (strain Ellin6076).